Reading from the N-terminus, the 209-residue chain is Uracil phosphoribosyltransferase (209 aa).

Residues Arg79, Arg104, and 131-139 (DPMLATGGS) each bind 5-phospho-alpha-D-ribose 1-diphosphate. Uracil is bound by residues Ile194 and 199-201 (GDA). 5-phospho-alpha-D-ribose 1-diphosphate is bound at residue Asp200.

It belongs to the UPRTase family. Requires Mg(2+) as cofactor.

The catalysed reaction is UMP + diphosphate = 5-phospho-alpha-D-ribose 1-diphosphate + uracil. Its pathway is pyrimidine metabolism; UMP biosynthesis via salvage pathway; UMP from uracil: step 1/1. Allosterically activated by GTP. Its function is as follows. Catalyzes the conversion of uracil and 5-phospho-alpha-D-ribose 1-diphosphate (PRPP) to UMP and diphosphate. In Oceanobacillus iheyensis (strain DSM 14371 / CIP 107618 / JCM 11309 / KCTC 3954 / HTE831), this protein is Uracil phosphoribosyltransferase.